A 103-amino-acid chain; its full sequence is Co-chaperonin GroES (103 aa).

Belongs to the GroES chaperonin family. As to quaternary structure, heptamer of 7 subunits arranged in a ring. Interacts with the chaperonin GroEL.

The protein resides in the cytoplasm. Together with the chaperonin GroEL, plays an essential role in assisting protein folding. The GroEL-GroES system forms a nano-cage that allows encapsulation of the non-native substrate proteins and provides a physical environment optimized to promote and accelerate protein folding. GroES binds to the apical surface of the GroEL ring, thereby capping the opening of the GroEL channel. This is Co-chaperonin GroES from Trichodesmium erythraeum (strain IMS101).